The primary structure comprises 69 residues: Alpha-conotoxin Mr1.7a (69 aa).

An N-terminal signal peptide occupies residues 1–21 (MGMRMMFTVFLLVVLATTVVS). Positions 22 to 49 (FTSNRVLDPAFRRRNAAAKASDLIALNA) are excised as a propeptide. 2 positions are modified to 4-hydroxyproline; in Mr1.7b: proline 52 and proline 58. Cystine bridges form between cysteine 54–cysteine 60 and cysteine 55–cysteine 68. The interval 56–58 (THP) is lacks the Ser-Xaa-Pro motif that is crucial for potent interaction with nAChR. Cysteine 68 carries the post-translational modification Cysteine amide.

The protein belongs to the conotoxin A superfamily. Two 4-hydroxyprolines have been detected by MS but the assignment of which of the three prolines is modified is uncertain. Expressed by the venom duct.

The protein localises to the secreted. Its function is as follows. Acts as a co-agonist with PNU (an alpha-7 nAChR-selective allosteric modulator) at the endogenous alpha-7/CHRNA7 nicotinic acetylcholine receptors (nAChR) when tested in human SH-SY5Y neuroblastoma cells. Is the third alpha-conotoxin that acts as an agonist (after alpha-conotoxin SrIA/SrIB). Also acts as an antagonist at human alpha-7 nAChRs heterologously expressed in Xenopus oocytes. Has possibly a distinct nAChR binding mode from other alpha-conotoxins, due to a different three residue motif (lacks the Ser-Xaa-Pro motif). Acts as a weak partial agonist at alpha-7/CHRNA7 nicotinic acetylcholine receptors (nAChR) when tested in human SH-SY5Y neuroblastoma cells. Has possibly a distinct nAChR binding mode from other alpha-conotoxins, due to a different three residue motif (lacks the Ser-Xaa-Pro motif). This Conus marmoreus (Marble cone) protein is Alpha-conotoxin Mr1.7a.